A 420-amino-acid polypeptide reads, in one-letter code: Protein MucB (420 aa).

Residues 2 to 187 (FALIDVNGMY…LPVAEVWGVG (186 aa)) form the UmuC domain.

This sequence belongs to the DNA polymerase type-Y family.

Its function is as follows. Involved in UV protection and mutation. The chain is Protein MucB (mucB) from Escherichia coli.